A 38-amino-acid polypeptide reads, in one-letter code: Photosystem II reaction center protein L (38 aa).

The helical transmembrane segment at Ser17–Phe37 threads the bilayer.

It belongs to the PsbL family. In terms of assembly, PSII is composed of 1 copy each of membrane proteins PsbA, PsbB, PsbC, PsbD, PsbE, PsbF, PsbH, PsbI, PsbJ, PsbK, PsbL, PsbM, PsbT, PsbX, PsbY, PsbZ, Psb30/Ycf12, at least 3 peripheral proteins of the oxygen-evolving complex and a large number of cofactors. It forms dimeric complexes.

The protein localises to the plastid. The protein resides in the chloroplast thylakoid membrane. One of the components of the core complex of photosystem II (PSII). PSII is a light-driven water:plastoquinone oxidoreductase that uses light energy to abstract electrons from H(2)O, generating O(2) and a proton gradient subsequently used for ATP formation. It consists of a core antenna complex that captures photons, and an electron transfer chain that converts photonic excitation into a charge separation. This subunit is found at the monomer-monomer interface and is required for correct PSII assembly and/or dimerization. In Cedrus deodara (Deodar cedar), this protein is Photosystem II reaction center protein L.